Consider the following 488-residue polypeptide: BTB/POZ domain-containing protein 1 (488 aa).

The span at 1-19 (MASLGSAAAGEPATGAEAE) shows a compositional bias: low complexity. Positions 1–42 (MASLGSAAAGEPATGAEAEPGPPAPPPPPPPPPAPSPSALGP) are disordered. A compositionally biased stretch (pro residues) spans 20–36 (PGPPAPPPPPPPPPAPS). Residues 75–151 (SDVRFVLGKG…LYSDEVQIGP (77 aa)) form the BTB domain. Arginine 85 is modified (omega-N-methylarginine). Residues 190-290 (LTQARLFDEP…IRFPLMTIEE (101 aa)) enclose the BACK domain.

Interacts (via C-terminus) with TOP1. Interacts with TRIM5 isoform Delta. Interacts with CUL3. In terms of tissue distribution, strongly expressed in heart and skeletal muscle. Weakly expressed in myoblast C2C12 cells, but strongly up-regulated upon their differentiation into myotubes.

It is found in the cytoplasm. It participates in protein modification; protein ubiquitination. Its function is as follows. Probable substrate-specific adapter of an E3 ubiquitin-protein ligase complex which mediates the ubiquitination and subsequent proteasomal degradation of target proteins. Seems to regulate expression levels and/or subnuclear distribution of TOP1, via an unknown mechanism. May play a role in mesenchymal differentiation where it promotes myogenic differentiation and suppresses adipogenesis. This is BTB/POZ domain-containing protein 1 (Btbd1) from Mus musculus (Mouse).